We begin with the raw amino-acid sequence, 1077 residues long: Disheveled-associated activator of morphogenesis 1 (1077 aa).

The residue at position 34 (Ser-34) is a Phosphoserine. Residues 45 to 420 (LPMPPVEELD…QIVIQNDKGQ (376 aa)) enclose the GBD/FH3 domain. A coiled-coil region spans residues 437–526 (RMLVNENEVK…ELNRRAVCAA (90 aa)). 2 disordered regions span residues 457 to 478 (KEHN…AKTQ) and 526 to 596 (AVPG…PVSL). Residues 528–599 (PGGPSPGAPG…PGAPVSLTLK (72 aa)) form the FH1 domain. 2 stretches are compositionally biased toward pro residues: residues 530-539 (GPSPGAPGGP) and 549-592 (LPPP…PPGA). Positions 600–1008 (KKNIPQPTNA…EERRARLEAQ (409 aa)) constitute an FH2 domain. Positions 693–702 (QNCNILLSRL) are actin-binding. Positions 1007-1026 (AQLKEQRERERKVRKAKESS) are enriched in basic and acidic residues. Disordered stretches follow at residues 1007 to 1033 (AQLK…GEFD) and 1056 to 1077 (RKRI…KLNF). Phosphoserine occurs at positions 1026 and 1029. The DAD domain occupies 1026 to 1057 (SEESGEFDDLVSALRSGEVFDKDLSKLKRNRK). Positions 1066-1077 (SSRERPITKLNF) are enriched in basic and acidic residues.

This sequence belongs to the formin homology family. As to quaternary structure, interacts with CIP4, FNBP1 and FNBP1L. Interacts with the SH3 domains of Abl, BTK, endophilin, spectrin and SRC. Binds specifically to GTP-bound CDC42 and RHOA. Interacts with INTU; INTU mediates the indirect interaction between DAAM1 and NPHP4. Interacts (via coiled coil domain) with KANK1 (via coiled coil domain). In early embryogenesis, expressed in embryonic and extraembryonic ectoderm. In later stages of gastrulation, expressed also in somites and ribs and posterior vertebrae of developing skeletal system. During organogenesis, expressed in CNS, PNS, stomach, liver and limb bud.

It localises to the cytoplasm. The protein localises to the cytoskeleton. It is found in the cilium basal body. In terms of biological role, binds to disheveled (Dvl) and Rho, and mediates Wnt-induced Dvl-Rho complex formation. May play a role as a scaffolding protein to recruit Rho-GDP and Rho-GEF, thereby enhancing Rho-GTP formation. Can direct nucleation and elongation of new actin filaments. Involved in building functional cilia. Involved in the organization of the subapical actin network in multiciliated epithelial cells. Together with DAAM2, required for myocardial maturation and sarcomere assembly. During cell division, may regulate RHOA activation that signals spindle orientation and chromosomal segregation. In Mus musculus (Mouse), this protein is Disheveled-associated activator of morphogenesis 1 (Daam1).